The primary structure comprises 348 residues: GMP reductase 2 (348 aa).

NADP(+) is bound by residues 26 to 27 (SR), K78, 129 to 131 (DVA), and 180 to 181 (IG). K(+)-binding residues include G181, G183, and C186. The active-site Thioimidate intermediate is the C186. T188 acts as the Proton donor/acceptor in catalysis. R189 contributes to the K(+) binding site. GMP contacts are provided by residues 219–221 (DGG), 242–243 (GG), 268–270 (GMS), and 286–290 (RASEG). NADP(+)-binding positions include M269 and 285-286 (YR). At K291 the chain carries N6-acetyllysine. Residue 314 to 317 (STCT) participates in NADP(+) binding.

This sequence belongs to the IMPDH/GMPR family. GuaC type 1 subfamily. Homotetramer.

It carries out the reaction IMP + NH4(+) + NADP(+) = GMP + NADPH + 2 H(+). Catalyzes the irreversible NADPH-dependent deamination of GMP to IMP. It functions in the conversion of nucleobase, nucleoside and nucleotide derivatives of G to A nucleotides, and in maintaining the intracellular balance of A and G nucleotides. Plays a role in modulating cellular differentiation. This Mus musculus (Mouse) protein is GMP reductase 2.